The primary structure comprises 146 residues: Snaclec echicetin subunit beta (146 aa).

An N-terminal signal peptide occupies residues M1 to A23. 3 disulfides stabilise this stretch: C25–C36, C53–C142, and C119–C134. In terms of domain architecture, C-type lectin spans Y32–K143.

This sequence belongs to the snaclec family. Heterodimer of subunits alpha and beta; disulfide-linked. As to expression, expressed by the venom gland.

It is found in the secreted. Its function is as follows. Binding of echicetin to glycoprotein Ibalpha (GP1BA) receptor on platelets alone results in inhibition of platelet aggregation, while binding to both GPIba receptor and IgMk promotes platelet aggregation and signal transduction. This chain is Snaclec echicetin subunit beta, found in Echis carinatus (Saw-scaled viper).